A 490-amino-acid polypeptide reads, in one-letter code: Apocarotenoid-15,15'-oxygenase (490 aa).

His-183 lines the Fe cation pocket. Ser-206 serves as a coordination point for substrate. His-238 is a Fe cation binding site. Phe-303 provides a ligand contact to substrate. Residues His-304 and His-484 each contribute to the Fe cation site.

Belongs to the carotenoid oxygenase family. Fe(2+) is required as a cofactor.

It carries out the reaction all-trans-8'-apo-beta-carotenal + O2 = (2E,4E,6E)-2,6-dimethylocta-2,4,6-trienedial + all-trans-retinal. Cleaves a number of carotenals and carotenols in the all-trans configuration at the 15-15' double bond producing retinal or retinol, respectively. Also shows activity toward lycopenals and the corresponding alcohols. Does not cleave beta-carotene or lycopene. The polypeptide is Apocarotenoid-15,15'-oxygenase (Synechocystis sp. (strain ATCC 27184 / PCC 6803 / Kazusa)).